Consider the following 453-residue polypeptide: Probable glycine dehydrogenase (decarboxylating) subunit 1 (453 aa).

It belongs to the GcvP family. N-terminal subunit subfamily. As to quaternary structure, the glycine cleavage system is composed of four proteins: P, T, L and H. In this organism, the P 'protein' is a heterodimer of two subunits.

It carries out the reaction N(6)-[(R)-lipoyl]-L-lysyl-[glycine-cleavage complex H protein] + glycine + H(+) = N(6)-[(R)-S(8)-aminomethyldihydrolipoyl]-L-lysyl-[glycine-cleavage complex H protein] + CO2. Its function is as follows. The glycine cleavage system catalyzes the degradation of glycine. The P protein binds the alpha-amino group of glycine through its pyridoxal phosphate cofactor; CO(2) is released and the remaining methylamine moiety is then transferred to the lipoamide cofactor of the H protein. This is Probable glycine dehydrogenase (decarboxylating) subunit 1 from Nitrosomonas europaea (strain ATCC 19718 / CIP 103999 / KCTC 2705 / NBRC 14298).